We begin with the raw amino-acid sequence, 286 residues long: Alpha-ketoglutarate-dependent dioxygenase alkB homolog 3 (286 aa).

A disordered region spans residues 21–45 (QAIAQPATTAKSHLHQKPGQTWKNK). The span at 22–31 (AIAQPATTAK) shows a compositional bias: polar residues. Residues Trp115 and 141–143 (YTY) contribute to the substrate site. One can recognise a Fe2OG dioxygenase domain in the interval 172–278 (TFNSLLCNLY…RVNLTFRTVY (107 aa)). The residue at position 177 (Leu177) is a (4R)-5-hydroxyleucine; alternate. The residue at position 177 (Leu177) is a (4R)-5-oxoleucine; alternate. Position 179–181 (179–181 (NLY)) interacts with 2-oxoglutarate. Fe cation contacts are provided by His191 and Asp193. Residue Asp194 coordinates substrate. His257 is a Fe cation binding site. 2-oxoglutarate-binding positions include 269-275 (RVNLTFR) and Arg275.

This sequence belongs to the alkB family. In terms of assembly, interacts with the ASCC complex composed of ASCC1, ASCC2 and ASCC3. Interacts directly with ASCC3, and is thereby recruited to the ASCC complex. Interacts with OTUD4; the interaction is direct. Interacts with USP7 and USP9X. Fe(2+) is required as a cofactor. Post-translationally, ubiquitinated; undergoes 'Lys-48'-linked polyubiquitination. OTUD4 promotes USP7 and USP9X-dependent deubiquitination of 'Lys-48'-polyubiquitinated ALKBH3 promoting the repair of alkylated DNA lesions. As to expression, ubiquitous. Detected in heart, pancreas, skeletal muscle, thymus, testis, ovary, spleen, prostate, small intestine, peripheral blood leukocytes, urinary bladder and colon.

It localises to the nucleus. Its subcellular location is the cytoplasm. The catalysed reaction is an N(1)-methyladenosine in mRNA + 2-oxoglutarate + O2 = an adenosine in mRNA + formaldehyde + succinate + CO2. It catalyses the reaction a methylated nucleobase within DNA + 2-oxoglutarate + O2 = a nucleobase within DNA + formaldehyde + succinate + CO2. The enzyme catalyses an N(1)-methyl-2'-deoxyadenosine in single-stranded DNA + 2-oxoglutarate + O2 = a 2'-deoxyadenosine in single-stranded DNA + formaldehyde + succinate + CO2 + H(+). It carries out the reaction an N(3)-methyl-2'-deoxycytidine in single-stranded DNA + 2-oxoglutarate + O2 = a 2'-deoxycytidine in single-stranded DNA + formaldehyde + succinate + CO2 + H(+). The catalysed reaction is a 3,N(4)-etheno-2'-deoxycytidine in single-stranded DNA + 2-oxoglutarate + O2 + H2O = a 2'-deoxycytidine in single-stranded DNA + glyoxal + succinate + CO2. Activated by ascorbate. Its function is as follows. Dioxygenase that mediates demethylation of DNA and RNA containing 1-methyladenosine (m1A). Repairs alkylated DNA containing 1-methyladenosine (m1A) and 3-methylcytosine (m3C) by oxidative demethylation. Has a strong preference for single-stranded DNA. Able to process alkylated m3C within double-stranded regions via its interaction with ASCC3, which promotes DNA unwinding to generate single-stranded substrate needed for ALKBH3. Can repair exocyclic 3,N4-ethenocytosine adducs in single-stranded DNA. Also acts on RNA. Demethylates N(1)-methyladenosine (m1A) RNA, an epigenetic internal modification of messenger RNAs (mRNAs) highly enriched within 5'-untranslated regions (UTRs) and in the vicinity of start codons. Requires molecular oxygen, alpha-ketoglutarate and iron. This Homo sapiens (Human) protein is Alpha-ketoglutarate-dependent dioxygenase alkB homolog 3.